The primary structure comprises 491 residues: Putative mannan endo-1,4-beta-mannosidase 5 (491 aa).

The first 31 residues, 1–31 (METSYREEEARRKASLLHCIFFFLLGALAMA), serve as a signal peptide directing secretion. Positions 134 and 248 each coordinate substrate. The active-site Proton donor is E249. Residue Y330 coordinates substrate. Residue E372 is the Nucleophile of the active site. N385 carries N-linked (GlcNAc...) asparagine glycosylation. Position 416 (W416) interacts with substrate. Residue N471 is glycosylated (N-linked (GlcNAc...) asparagine).

It belongs to the glycosyl hydrolase 5 (cellulase A) family. Expression not detected.

The protein localises to the secreted. The catalysed reaction is Random hydrolysis of (1-&gt;4)-beta-D-mannosidic linkages in mannans, galactomannans and glucomannans.. The protein is Putative mannan endo-1,4-beta-mannosidase 5 (MAN5) of Oryza sativa subsp. japonica (Rice).